The sequence spans 504 residues: Anthocyanidin 3-O-glucoside 5-O-glucosyltransferase (504 aa).

The active-site Proton acceptor is the His-23. His-23 contributes to the an anthocyanidin binding site. A disordered region spans residues 107–126 (TKKGQGQGQGQGQGQGQGQG). Over residues 111–125 (QGQGQGQGQGQGQGQ) the composition is skewed to gly residues. Positions 157, 377, 392, 395, 396, 397, 400, 416, and 417 each coordinate UDP-alpha-D-glucose.

It belongs to the UDP-glycosyltransferase family. As to expression, predominantly expressed in petals and weakly in filaments. Not expressed in leaves, stems and other floral organs.

The catalysed reaction is an anthocyanidin 3-O-beta-D-glucoside + UDP-alpha-D-glucose = an anthocyanidin 3,5-di-O-beta-D-glucoside + UDP + 2 H(+). It participates in pigment biosynthesis; anthocyanin biosynthesis. Catalyzes the glucosylation at the O-5 position of anthocyanidin 3-glucosides to form anthocyanidin 3,5-di-O-glucosides using UDP-glucose as sugar donor. Anthocyanidin 3,5-di-O-glucosides are molecules that are responsible for pigmentation. Involved in biosynsthesis of accumulate gentiodelphin, a unique polyacylated delphinidin-type anthocyanin, in the petals. Also acts on anthocyanidin 3-O-(6-O-malonylglucoside). Much less active with hydroxycinnamoylglucose derivatives. No activity in the absence of the 3-O-glucoside group. This Gentiana triflora (Clustered gentian) protein is Anthocyanidin 3-O-glucoside 5-O-glucosyltransferase (5GT7).